The sequence spans 446 residues: Exodeoxyribonuclease 7 large subunit (446 aa).

Belongs to the XseA family. As to quaternary structure, heterooligomer composed of large and small subunits.

Its subcellular location is the cytoplasm. It carries out the reaction Exonucleolytic cleavage in either 5'- to 3'- or 3'- to 5'-direction to yield nucleoside 5'-phosphates.. Bidirectionally degrades single-stranded DNA into large acid-insoluble oligonucleotides, which are then degraded further into small acid-soluble oligonucleotides. This chain is Exodeoxyribonuclease 7 large subunit, found in Streptococcus equi subsp. zooepidemicus (strain MGCS10565).